The primary structure comprises 731 residues: Lanosterol synthase ERG7 (731 aa).

Threonine 2 carries the post-translational modification N-acetylthreonine. Residues 125-167 (RIELIRYIVNTAHPVDGGWGLHSVDKSTVFGTVLNYVILRLLG) form a PFTB 1 repeat. Aspartate 456 acts as the Proton donor in catalysis. One copy of the PFTB 2 repeat lies at 615-661 (VRKGCDFLVSKQMKDGGWGESMKSSELHSYVDSEKSLVVQTAWALIA).

This sequence belongs to the terpene cyclase/mutase family.

It localises to the lipid droplet. The protein resides in the endoplasmic reticulum membrane. It carries out the reaction (S)-2,3-epoxysqualene = lanosterol. Its pathway is terpene metabolism; lanosterol biosynthesis; lanosterol from farnesyl diphosphate: step 3/3. Its activity is regulated as follows. Catalytic activity requires the presence of ERG27. Lanosterol synthase; part of the third module of ergosterol biosynthesis pathway that includes the late steps of the pathway. ERG7 catalyzes the cyclization of (S)-2,3 oxidosqualene to lanosterol, a reaction that forms the sterol core. The third module or late pathway involves the ergosterol synthesis itself through consecutive reactions that mainly occur in the endoplasmic reticulum (ER) membrane. Firstly, the squalene synthase ERG9 catalyzes the condensation of 2 farnesyl pyrophosphate moieties to form squalene, which is the precursor of all steroids. Squalene synthase is crucial for balancing the incorporation of farnesyl diphosphate (FPP) into sterol and nonsterol isoprene synthesis. Secondly, the squalene epoxidase ERG1 catalyzes the stereospecific oxidation of squalene to (S)-2,3-epoxysqualene, which is considered to be a rate-limiting enzyme in steroid biosynthesis. Then, the lanosterol synthase ERG7 catalyzes the cyclization of (S)-2,3 oxidosqualene to lanosterol, a reaction that forms the sterol core. In the next steps, lanosterol is transformed to zymosterol through a complex process involving various demethylation, reduction and desaturation reactions. The lanosterol 14-alpha-demethylase ERG11 (also known as CYP51) catalyzes C14-demethylation of lanosterol to produce 4,4'-dimethyl cholesta-8,14,24-triene-3-beta-ol, which is critical for ergosterol biosynthesis. The C-14 reductase ERG24 reduces the C14=C15 double bond of 4,4-dimethyl-cholesta-8,14,24-trienol to produce 4,4-dimethyl-cholesta-8,24-dienol. 4,4-dimethyl-cholesta-8,24-dienol is substrate of the C-4 demethylation complex ERG25-ERG26-ERG27 in which ERG25 catalyzes the three-step monooxygenation required for the demethylation of 4,4-dimethyl and 4alpha-methylsterols, ERG26 catalyzes the oxidative decarboxylation that results in a reduction of the 3-beta-hydroxy group at the C-3 carbon to an oxo group, and ERG27 is responsible for the reduction of the keto group on the C-3. ERG28 has a role as a scaffold to help anchor ERG25, ERG26 and ERG27 to the endoplasmic reticulum and ERG29 regulates the activity of the iron-containing C4-methylsterol oxidase ERG25. Then, the sterol 24-C-methyltransferase ERG6 catalyzes the methyl transfer from S-adenosyl-methionine to the C-24 of zymosterol to form fecosterol. The C-8 sterol isomerase ERG2 catalyzes the reaction which results in unsaturation at C-7 in the B ring of sterols and thus converts fecosterol to episterol. The sterol-C5-desaturase ERG3 then catalyzes the introduction of a C-5 double bond in the B ring to produce 5-dehydroepisterol. The C-22 sterol desaturase ERG5 further converts 5-dehydroepisterol into ergosta-5,7,22,24(28)-tetraen-3beta-ol by forming the C-22(23) double bond in the sterol side chain. Finally, ergosta-5,7,22,24(28)-tetraen-3beta-ol is substrate of the C-24(28) sterol reductase ERG4 to produce ergosterol. This chain is Lanosterol synthase ERG7, found in Saccharomyces cerevisiae (strain ATCC 204508 / S288c) (Baker's yeast).